Here is a 464-residue protein sequence, read N- to C-terminus: GTPase Der (464 aa).

2 consecutive EngA-type G domains span residues 5–169 (PTIA…KQKG) and 190–368 (IKVA…RESH). GTP is bound by residues 11–18 (GRPNVGKS), 58–62 (DTGGI), 121–124 (NKAD), 196–203 (GRPNAGKS), 243–247 (DTAGM), and 308–311 (NKFD). One can recognise a KH-like domain in the interval 369-461 (NLPTTGQLNR…PVIFSARSRV (93 aa)).

Belongs to the TRAFAC class TrmE-Era-EngA-EngB-Septin-like GTPase superfamily. EngA (Der) GTPase family. As to quaternary structure, associates with the 50S ribosomal subunit.

GTPase that plays an essential role in the late steps of ribosome biogenesis. This is GTPase Der from Akkermansia muciniphila (strain ATCC BAA-835 / DSM 22959 / JCM 33894 / BCRC 81048 / CCUG 64013 / CIP 107961 / Muc).